The following is a 1597-amino-acid chain: Transmembrane protein 131-like (1597 aa).

Positions 1–40 (MAGLRRPQSGAYRRTAAAVNLLLGVFQVLLSCCRPGGAQG) are cleaved as a signal peptide. Residues 41–869 (QAFEPLPNVV…VVPGPSWEES (829 aa)) are Extracellular-facing. Asn343, Asn593, Asn709, and Asn846 each carry an N-linked (GlcNAc...) asparagine glycan. The required for Wnt-signaling inhibition and LRP6 degradation stretch occupies residues 696–916 (DYGKVTSLIL…QNGSSSSQQN (221 aa)). The helical transmembrane segment at 870–890 (FWRLTVFFVSLSLLGVILIAF) threads the bilayer. Over 891 to 1597 (QQAQYILMEF…SRDSSYCGNM (707 aa)) the chain is Cytoplasmic. The segment covering 907–917 (QNGSSSSQQNG) has biased composition (low complexity). Disordered stretches follow at residues 907 to 928 (QNGS…SHPH), 1096 to 1240 (AELK…EQRL), and 1252 to 1322 (DGAG…SDCD). Over residues 1213–1222 (RPCRRNKKRA) the composition is skewed to basic residues. The segment covering 1223-1239 (SAQASSSPRPSEQSEQR) has biased composition (low complexity). A compositionally biased stretch (basic and acidic residues) spans 1269–1290 (PERREEDSYYQKSEKKCADKFC). Residues 1291-1319 (SDSSSDCGSSSGSVRASRGSWGSWSSSSS) are compositionally biased toward low complexity.

It belongs to the TMEM131 family.

Its subcellular location is the cell membrane. It is found in the endoplasmic reticulum. The protein resides in the cytoplasm. In its membrane-associated form, antagonizes canonical Wnt signaling by triggering lysosome-dependent degradation of Wnt-activated LRP6. Regulates thymocyte proliferation. The sequence is that of Transmembrane protein 131-like from Mus musculus (Mouse).